Reading from the N-terminus, the 883-residue chain is DNA double-strand break repair Rad50 ATPase (883 aa).

Residues Arg12, Asn32–Ser38, and Gln134 each bind ATP. A coiled-coil region spans residues Glu218–Lys420. The region spanning Ile395–Lys492 is the Zinc-hook domain. Positions 440 and 443 each coordinate Zn(2+). 2 coiled-coil regions span residues Arg452–Gly585 and Glu620–Glu741. Phe790 to Glu795 contacts ATP.

Belongs to the SMC family. RAD50 subfamily. Homodimer. Forms a heterotetramer composed of two Mre11 subunits and two Rad50 subunits. Zn(2+) serves as cofactor.

Its function is as follows. Part of the Rad50/Mre11 complex, which is involved in the early steps of DNA double-strand break (DSB) repair. The complex may facilitate opening of the processed DNA ends to aid in the recruitment of HerA and NurA. Rad50 controls the balance between DNA end bridging and DNA resection via ATP-dependent structural rearrangements of the Rad50/Mre11 complex. In Thermococcus kodakarensis (strain ATCC BAA-918 / JCM 12380 / KOD1) (Pyrococcus kodakaraensis (strain KOD1)), this protein is DNA double-strand break repair Rad50 ATPase.